Here is a 325-residue protein sequence, read N- to C-terminus: MASATRKDLLKKVYNMVPPMLESFHKGQLGRVAVIGGSEDYTGAPYFSAMASAKLGCDMSHVICEPGAGAVIKTYSPNLMVHPYMRQSKNVGQNENIESIKSEVVAMLSRLHVVVIGPGLGRDKLMQDTCAEVIQEARKQGIPFVLDADGLYLAQTRPELVDGCTECILTPNVVEFGRLAKAKGVNVDEGDPSELCSKLAKAFGGVTIIQKGAKDYISNGSQTLISEGEGGLKRSGGQGDTLTGSLATLLAYRKAYHDKIWDHGTNMEPSETLALAAYGGSCITRECSKLAYKEKGRSLQAADLTEHVHTAFLNVIGEKEETPKL.

Residues 9-315 form the YjeF C-terminal domain; it reads LLKKVYNMVP…EHVHTAFLNV (307 aa). (6S)-NADPHX-binding positions include G119 and 172 to 178; that span reads NVVEFGR. ATP-binding positions include 211–215 and 230–239; these read KGAKD and GGLKRSGGQG. Residue D240 coordinates (6S)-NADPHX.

Belongs to the NnrD/CARKD family. Mg(2+) serves as cofactor.

The protein resides in the cytoplasm. It carries out the reaction (6S)-NADHX + ATP = ADP + phosphate + NADH + H(+). The catalysed reaction is (6S)-NADPHX + ATP = ADP + phosphate + NADPH + H(+). Catalyzes the dehydration of the S-form of NAD(P)HX at the expense of ATP, which is converted to ADP. Together with NAD(P)HX epimerase, which catalyzes the epimerization of the S- and R-forms, the enzyme allows the repair of both epimers of NAD(P)HX, a damaged form of NAD(P)H that is a result of enzymatic or heat-dependent hydration. The sequence is that of ATP-dependent (S)-NAD(P)H-hydrate dehydratase from Phaeosphaeria nodorum (strain SN15 / ATCC MYA-4574 / FGSC 10173) (Glume blotch fungus).